Here is a 476-residue protein sequence, read N- to C-terminus: mRNA cap guanine-N(7) methyltransferase (476 aa).

A compositionally biased stretch (basic and acidic residues) spans M1–S14. The tract at residues M1 to K128 is disordered. Positions A20–C50 are enriched in polar residues. Phosphoserine is present on residues S24, S28, and S29. Composition is skewed to basic and acidic residues over residues D54 to K68, L84 to K93, and R107 to Y117. A Phosphoserine modification is found at S118. Residues K126–K128 carry the Nuclear localization signal motif. Residues S167–Q475 form the mRNA cap 0 methyltransferase domain. N176–N177 contacts mRNA. S-adenosyl-L-methionine is bound by residues K180, G205, D227, D261, Q284, and Y289.

This sequence belongs to the class I-like SAM-binding methyltransferase superfamily. mRNA cap 0 methyltransferase family. As to quaternary structure, interacts with importin alpha, leading to stimulate both RNA-binding and methyltransferase activity. Interaction with importin alpha and beta is required for its nuclear localization, importin beta dissociating in response to RanGTP, allowing RNMT-importin alpha to bind RNA substrates. Interacts with elongating form of polymerase II and RNGTT. Interacts with RAMAC, this interaction significantly enhances RNA-binding and cap methyltransferase activity.

The protein resides in the nucleus. It catalyses the reaction a 5'-end (5'-triphosphoguanosine)-ribonucleoside in mRNA + S-adenosyl-L-methionine = a 5'-end (N(7)-methyl 5'-triphosphoguanosine)-ribonucleoside in mRNA + S-adenosyl-L-homocysteine. Methyltransferase activity is activated by RAMAC. Its function is as follows. Catalytic subunit of the mRNA-capping methyltransferase RNMT:RAMAC complex that methylates the N7 position of the added guanosine to the 5'-cap structure of mRNAs. Binds RNA containing 5'-terminal GpppC. This Macaca fascicularis (Crab-eating macaque) protein is mRNA cap guanine-N(7) methyltransferase (RNMT).